Here is a 146-residue protein sequence, read N- to C-terminus: Small ribosomal subunit protein bS16 (146 aa).

Basic and acidic residues predominate over residues 84-102; the sequence is SHLEAQKAAVERLGRRKDY. The interval 84-146 is disordered; the sequence is SHLEAQKAAV…DAPAAEATTE (63 aa). The span at 110 to 119 shows a compositional bias: low complexity; the sequence is APKAAPVAEA. Over residues 120–130 the composition is skewed to acidic residues; the sequence is PAEEAPAEEPA. Over residues 131–146 the composition is skewed to low complexity; that stretch reads AEASTDDAPAAEATTE.

The protein belongs to the bacterial ribosomal protein bS16 family.

The polypeptide is Small ribosomal subunit protein bS16 (Rhodopirellula baltica (strain DSM 10527 / NCIMB 13988 / SH1)).